The primary structure comprises 288 residues: Programmed cell death protein 1 (288 aa).

The first 24 residues, 1-24, serve as a signal peptide directing secretion; the sequence is MWVRQVPWSFTWAVLQLSWQSGWL. Topologically, residues 25 to 169 are extracellular; the sequence is LEVPNGPWRS…PKPEGRFQGM (145 aa). The Ig-like V-type domain maps to 31–139; that stretch reads PWRSLTFYPA…PKAKIEESPG (109 aa). Asn49, Asn58, Asn74, and Asn116 each carry an N-linked (GlcNAc...) asparagine glycan. A disulfide bridge links Cys54 with Cys123. Residues 70 to 77 form an interaction with CD274/PDCD1L1 region; sequence LSPSNQTE. Residues 170–190 form a helical membrane-spanning segment; sequence VIGIMSALVGIPVLLLLAWAL. Topologically, residues 191-288 are cytoplasmic; that stretch reads AVFCSTSMSE…HEDGHCSWPL (98 aa). An ITIM motif motif is present at residues 223–228; the sequence is VAYEEL. A Phosphotyrosine modification is found at Tyr225. Lys235 participates in a covalent cross-link: Glycyl lysine isopeptide (Lys-Gly) (interchain with G-Cter in ubiquitin). Thr236 is modified (phosphothreonine; by MAPK3). An ITSM motif motif is present at residues 247–251; the sequence is EYATI. Tyr248 carries the post-translational modification Phosphotyrosine. The disordered stretch occupies residues 263-288; the sequence is GRRGSADGLQGPRPPRHEDGHCSWPL. The segment covering 277 to 288 has biased composition (basic and acidic residues); the sequence is PRHEDGHCSWPL.

Monomer. Interacts with CD274/PDCD1L1. Interacts with CD273/PDCD1LG2. Interacts with FBXO38; leading to ubiquitination and degradation by the proteasome. Ubiquitinated at Lys-235 by the SCF(FBXO38) complex, leading to its proteasomal degradation. Ubiquitinated via 'Lys-48'-linked polyubiquitin chains. Deubiquitinated and thus stabilized by USP5. Post-translationally, tyrosine phosphorylated at Tyr-225 (within ITIM motif) and Tyr-248 (ITSM motif) upon ligand binding. Phosphorylation at Tyr-248 promotes the recruitment of the protein tyrosine phosphatase PTPN11/SHP-2 that mediates dephosphorylation of key TCR proximal signaling molecules, such as ZAP70, PRKCQ/PKCtheta and CD247/CD3zeta. Phosphorylation at Thr-236 promotes the recruitment of the deubiquitinase USP5. In terms of tissue distribution, thymus-specific.

It is found in the cell membrane. In terms of biological role, inhibitory receptor on antigen activated T-cells that plays a critical role in induction and maintenance of immune tolerance to self. Delivers inhibitory signals upon binding to ligands, such as CD274/PDCD1L1 and CD273/PDCD1LG2. Following T-cell receptor (TCR) engagement, PDCD1 associates with CD3-TCR in the immunological synapse and directly inhibits T-cell activation. Suppresses T-cell activation through the recruitment of PTPN11/SHP-2: following ligand-binding, PDCD1 is phosphorylated within the ITSM motif, leading to the recruitment of the protein tyrosine phosphatase PTPN11/SHP-2 that mediates dephosphorylation of key TCR proximal signaling molecules, such as ZAP70, PRKCQ/PKCtheta and CD247/CD3zeta. The PDCD1-mediated inhibitory pathway is exploited by tumors to attenuate anti-tumor immunity and facilitate tumor survival. In Mus musculus (Mouse), this protein is Programmed cell death protein 1.